We begin with the raw amino-acid sequence, 448 residues long: Probable D-serine dehydratase (448 aa).

Lys119 is subject to N6-(pyridoxal phosphate)lysine.

Belongs to the serine/threonine dehydratase family. DsdA subfamily. Pyridoxal 5'-phosphate serves as cofactor.

The enzyme catalyses D-serine = pyruvate + NH4(+). The chain is Probable D-serine dehydratase from Pseudomonas aeruginosa (strain UCBPP-PA14).